Here is a 917-residue protein sequence, read N- to C-terminus: Smoothelin (917 aa).

Alanine 2 is modified (N-acetylalanine). Positions 24-89 (LAERRRIRSA…ARLAGQLESM (66 aa)) form a coiled coil. Positions 157–456 (EVPEREEQEQ…AVGTAEPGGS (300 aa)) are disordered. Residues 177 to 188 (PEGTSQDVTTVT) show a composition bias toward polar residues. Composition is skewed to low complexity over residues 193–210 (APPG…SSPT) and 220–232 (PAEA…EVPG). Residues 233 to 243 (SPEPPPSPPKT) are compositionally biased toward pro residues. Positions 244–258 (TSPEPQESPTLPSTE) are enriched in low complexity. Polar residues predominate over residues 298–326 (RSLSVLSPRQPAQNRESTPLASGPSSFQR). Phosphoserine occurs at positions 299, 301, and 304. Residues 329-338 (SVRDRVHKFT) show a composition bias toward basic and acidic residues. A Phosphoserine modification is found at serine 341. Threonine 351 bears the Phosphothreonine mark. Residue serine 357 is modified to Phosphoserine. Residues threonine 360 and threonine 373 each carry the phosphothreonine modification. Low complexity predominate over residues 363 to 392 (RLLGPSLTSTTPASSSSGSSSRGPSDTSSR). Phosphoserine occurs at positions 503, 514, 523, and 576. Disordered stretches follow at residues 560 to 580 (ANGA…PLSA) and 617 to 767 (QRKR…RKAM). A coiled-coil region spans residues 603-630 (EERKLIRAALRELRQRKRDQRDKERERR). Basic and acidic residues predominate over residues 617–640 (QRKRDQRDKERERRLQEARGRPGE). Residues 676–689 (NDGTRTARTTTVES) show a composition bias toward polar residues. Residues 701 to 720 (STMMQTKTFSSSSSSKKMGS) show a composition bias toward low complexity. Serine 729 is subject to Phosphoserine. Residues 738–750 (LEKRQAEKKKELM) show a composition bias toward basic and acidic residues. A Phosphoserine modification is found at serine 792. Residues 799–906 (NSIKQMLLDW…YVQSLYNHLR (108 aa)) form the Calponin-homology (CH) domain.

It belongs to the smoothelin family. Smooth muscle; contractile or vascular (for the long form).

It localises to the cytoplasm. The protein resides in the cytoskeleton. In terms of biological role, structural protein of the cytoskeleton. The sequence is that of Smoothelin (SMTN) from Homo sapiens (Human).